The primary structure comprises 396 residues: Elongation factor Tu (396 aa).

Residues 10–206 form the tr-type G domain; the sequence is KPHVNIGTIG…ACDTYIPAPV (197 aa). A G1 region spans residues 19–26; that stretch reads GHVDHGKT. 19–26 lines the GTP pocket; that stretch reads GHVDHGKT. Thr-26 is a Mg(2+) binding site. The segment at 60 to 64 is G2; the sequence is GITIS. Residues 81–84 form a G3 region; it reads DCPG. GTP is bound by residues 81–85 and 136–139; these read DCPGH and NKVD. Residues 136-139 form a G4 region; sequence NKVD. Positions 174–176 are G5; the sequence is SAL.

Belongs to the TRAFAC class translation factor GTPase superfamily. Classic translation factor GTPase family. EF-Tu/EF-1A subfamily. As to quaternary structure, monomer.

It is found in the cytoplasm. It catalyses the reaction GTP + H2O = GDP + phosphate + H(+). Functionally, GTP hydrolase that promotes the GTP-dependent binding of aminoacyl-tRNA to the A-site of ribosomes during protein biosynthesis. The protein is Elongation factor Tu of Bdellovibrio bacteriovorus (strain ATCC 15356 / DSM 50701 / NCIMB 9529 / HD100).